Here is a 162-residue protein sequence, read N- to C-terminus: Peroxiredoxin-2 (162 aa).

The 159-residue stretch at 4–162 (IAVGDVLPDG…SSADDILKDL (159 aa)) folds into the Thioredoxin domain. Cysteine 51 serves as the catalytic Cysteine sulfenic acid (-SOH) intermediate.

The protein belongs to the peroxiredoxin family. Prx5 subfamily. As to quaternary structure, monomer. Homodimer. Glutathionylation of C(P) causes the dimer to dissociate. Subsequent reduction of the mixed disulfide bond leads again to dimerization.

It carries out the reaction [glutaredoxin]-dithiol + a hydroperoxide = [glutaredoxin]-disulfide + an alcohol + H2O. Its function is as follows. Thiol-specific peroxidase that catalyzes the reduction of hydrogen peroxide and organic hydroperoxides to water and alcohols, respectively. Can reduce H(2)O(2) and short chain organic, fatty acid, and phospholipid hydroperoxides. Plays a role in cell protection against oxidative stress by detoxifying peroxides. In Populus trichocarpa (Western balsam poplar), this protein is Peroxiredoxin-2.